Consider the following 84-residue polypeptide: Large ribosomal subunit protein bL27 (84 aa).

Positions 1-20 (MAHKKGGGSTKNGRDSNPKY) are disordered.

The protein belongs to the bacterial ribosomal protein bL27 family.

The protein is Large ribosomal subunit protein bL27 of Chlorobaculum tepidum (strain ATCC 49652 / DSM 12025 / NBRC 103806 / TLS) (Chlorobium tepidum).